The sequence spans 162 residues: Phosphopantetheine adenylyltransferase (162 aa).

Residue threonine 9 participates in substrate binding. ATP-binding positions include 9 to 10 and histidine 17; that span reads TF. Residues lysine 41, leucine 73, and arginine 87 each coordinate substrate. Residues 88–90, glutamate 98, and 123–129 contribute to the ATP site; these read GLR and LSYISSS.

This sequence belongs to the bacterial CoaD family. As to quaternary structure, homohexamer. The cofactor is Mg(2+).

The protein localises to the cytoplasm. The catalysed reaction is (R)-4'-phosphopantetheine + ATP + H(+) = 3'-dephospho-CoA + diphosphate. It participates in cofactor biosynthesis; coenzyme A biosynthesis; CoA from (R)-pantothenate: step 4/5. Reversibly transfers an adenylyl group from ATP to 4'-phosphopantetheine, yielding dephospho-CoA (dPCoA) and pyrophosphate. This is Phosphopantetheine adenylyltransferase from Teredinibacter turnerae (strain ATCC 39867 / T7901).